The chain runs to 421 residues: U-box domain-containing protein 25 (421 aa).

One can recognise a U-box domain in the interval 13-88 (QIPYHFRCPI…QEWCVANRSN (76 aa)).

It carries out the reaction S-ubiquitinyl-[E2 ubiquitin-conjugating enzyme]-L-cysteine + [acceptor protein]-L-lysine = [E2 ubiquitin-conjugating enzyme]-L-cysteine + N(6)-ubiquitinyl-[acceptor protein]-L-lysine.. It functions in the pathway protein modification; protein ubiquitination. In terms of biological role, functions as an E3 ubiquitin ligase. The sequence is that of U-box domain-containing protein 25 (PUB25) from Arabidopsis thaliana (Mouse-ear cress).